We begin with the raw amino-acid sequence, 440 residues long: L-gulonolactone oxidase (440 aa).

An FAD-binding PCMH-type domain is found at 17–187 (YGCSPEMYYQ…LTVTLQCVPQ (171 aa)). Position 54 is a pros-8alpha-FAD histidine (His-54). Residues 251–273 (IGFYLLEFLLWTSTYLPRLVGWI) form a helical membrane-spanning segment.

It belongs to the oxygen-dependent FAD-linked oxidoreductase family. Requires FAD as cofactor. As to expression, highly expressed in liver.

The protein localises to the microsome membrane. Its subcellular location is the endoplasmic reticulum membrane. The enzyme catalyses L-gulono-1,4-lactone + O2 = L-ascorbate + H2O2 + H(+). The protein operates within cofactor biosynthesis; L-ascorbate biosynthesis via UDP-alpha-D-glucuronate pathway; L-ascorbate from UDP-alpha-D-glucuronate: step 4/4. In terms of biological role, oxidizes L-gulono-1,4-lactone to hydrogen peroxide and L-xylo-hexulonolactone which spontaneously isomerizes to L-ascorbate. The chain is L-gulonolactone oxidase (Gulo) from Mus musculus (Mouse).